A 379-amino-acid polypeptide reads, in one-letter code: DNA (cytosine-5)-methyltransferase (379 aa).

An SAM-dependent MTase C5-type domain is found at 4-366 (LRVLEFYSGI…KVLVSPNEEE (363 aa)). Residue cysteine 78 is part of the active site. The span at 178 to 192 (KKEQDKHNEKVDENK) shows a compositional bias: basic and acidic residues. The disordered stretch occupies residues 178–205 (KKEQDKHNEKVDENKLNNNSNNNNEQNK). The span at 193-203 (LNNNSNNNNEQ) shows a compositional bias: low complexity.

The protein belongs to the class I-like SAM-binding methyltransferase superfamily. C5-methyltransferase family.

The protein resides in the nucleus. The catalysed reaction is a 2'-deoxycytidine in DNA + S-adenosyl-L-methionine = a 5-methyl-2'-deoxycytidine in DNA + S-adenosyl-L-homocysteine + H(+). Involved in epigenetic gene silencing. Methylates specific cytosine residues in the retrotransposons DIRS-1 and Skipper. The polypeptide is DNA (cytosine-5)-methyltransferase (dnmA) (Dictyostelium discoideum (Social amoeba)).